A 186-amino-acid chain; its full sequence is Signal peptidase complex catalytic subunit SEC11 (186 aa).

The Cytoplasmic segment spans residues 1 to 20 (MDALGLSKLRHLKPRQLLSQ). Residues 21–41 (VLNFALILSTAFMLWKGLSVA) traverse the membrane as a helical; Signal-anchor for type II membrane protein segment. The Lumenal segment spans residues 42 to 186 (TDSPSPIVVV…MGLLVIVQRE (145 aa)). Residues Ser-55, His-102, and Asp-128 each act as charge relay system in the active site. Residues 172-183 (ALLGIMGLLVIV) are C-terminal short (CTS) helix.

This sequence belongs to the peptidase S26B family. In terms of assembly, component of the signal peptidase complex (SPC) composed of a catalytic subunit SEC11 and three accessory subunits SPC1, SPC2 and SPC3. The complex induces a local thinning of the ER membrane which is used to measure the length of the signal peptide (SP) h-region of protein substrates. This ensures the selectivity of the complex towards h-regions shorter than 18-20 amino acids. SPC associates with the translocon complex.

It localises to the endoplasmic reticulum membrane. It catalyses the reaction Cleavage of hydrophobic, N-terminal signal or leader sequences from secreted and periplasmic proteins.. Catalytic component of the signal peptidase complex (SPC) which catalyzes the cleavage of N-terminal signal sequences from nascent proteins as they are translocated into the lumen of the endoplasmic reticulum. Specifically cleaves N-terminal signal peptides that contain a hydrophobic alpha-helix (h-region) shorter than 18-20 amino acids. The chain is Signal peptidase complex catalytic subunit SEC11 (SEC11) from Tuber melanosporum (strain Mel28) (Perigord black truffle).